A 145-amino-acid polypeptide reads, in one-letter code: Basic phospholipase A2 BFPA (145 aa).

An N-terminal signal peptide occupies residues 1 to 27 (MNPAHLLVLLAVCVSLLGAANIPPQSL). Cystine bridges form between Cys-38/Cys-97, Cys-52/Cys-144, Cys-54/Cys-70, Cys-69/Cys-125, Cys-76/Cys-118, Cys-86/Cys-111, and Cys-104/Cys-116. Residues Tyr-53, Gly-55, and Gly-57 each coordinate Ca(2+). His-73 is an active-site residue. Asp-74 contacts Ca(2+). Asp-119 is a catalytic residue.

Belongs to the phospholipase A2 family. Group I subfamily. D49 sub-subfamily. As to quaternary structure, homodimer; disulfide-linked. The cofactor is Ca(2+). As to expression, expressed by the venom gland.

The protein localises to the secreted. The catalysed reaction is a 1,2-diacyl-sn-glycero-3-phosphocholine + H2O = a 1-acyl-sn-glycero-3-phosphocholine + a fatty acid + H(+). In terms of biological role, snake venom phospholipase A2 (PLA2) that inhibits blood coagulation and shows bactericidal activities against both Gram-negative and -positive bacteria (E.coli, MIC=0.4 uM and S.aureus, MIC=0.1 uM). PLA2 catalyzes the calcium-dependent hydrolysis of the 2-acyl groups in 3-sn-phosphoglycerides. This is Basic phospholipase A2 BFPA from Bungarus fasciatus (Banded krait).